A 215-amino-acid polypeptide reads, in one-letter code: Phosphoserine phosphatase (215 aa).

Residue D11 is the Nucleophile of the active site. D11 and D13 together coordinate Mg(2+). D13 (proton donor) is an active-site residue. Residues E20, R56, 99–100 (SG), and K144 contribute to the substrate site. Residue D167 participates in Mg(2+) binding. N170 is a substrate binding site.

It belongs to the HAD-like hydrolase superfamily. SerB family. It depends on Mg(2+) as a cofactor.

The catalysed reaction is O-phospho-L-serine + H2O = L-serine + phosphate. It carries out the reaction O-phospho-D-serine + H2O = D-serine + phosphate. Its pathway is amino-acid biosynthesis; L-serine biosynthesis; L-serine from 3-phospho-D-glycerate: step 3/3. The sequence is that of Phosphoserine phosphatase from Streptococcus thermophilus (strain ATCC BAA-250 / LMG 18311).